A 506-amino-acid chain; its full sequence is RNA-splicing ligase RtcB homolog (506 aa).

Residues Asp-120, Cys-123, His-228, His-260, and His-354 each coordinate Mn(2+). Position 227 to 231 (227 to 231 (NHYAE)) interacts with GMP. GMP contacts are provided by residues 354–355 (HN), 403–406 (GGSM), Ser-410, 429–432 (HGAG), and Lys-505. The active-site GMP-histidine intermediate is His-429.

Belongs to the RtcB family. In terms of assembly, catalytic component of the tRNA-splicing ligase complex. Requires Mn(2+) as cofactor.

The enzyme catalyses a 3'-end 3'-phospho-ribonucleotide-RNA + a 5'-end dephospho-ribonucleoside-RNA + GTP = a ribonucleotidyl-ribonucleotide-RNA + GMP + diphosphate. The catalysed reaction is a 3'-end 2',3'-cyclophospho-ribonucleotide-RNA + a 5'-end dephospho-ribonucleoside-RNA + GTP + H2O = a ribonucleotidyl-ribonucleotide-RNA + GMP + diphosphate + H(+). Its function is as follows. Catalytic subunit of the tRNA-splicing ligase complex that acts by directly joining spliced tRNA halves to mature-sized tRNAs by incorporating the precursor-derived splice junction phosphate into the mature tRNA as a canonical 3',5'-phosphodiester. May act as an RNA ligase with broad substrate specificity, and may function toward other RNAs. In Anopheles gambiae (African malaria mosquito), this protein is RNA-splicing ligase RtcB homolog.